The following is an 825-amino-acid chain: NT-3 growth factor receptor (825 aa).

The N-terminal stretch at 1-31 (MDVSLCPAKCSFWRIFLLGSVWLDYVGSVLA) is a signal peptide. 2 cysteine pairs are disulfide-bonded: cysteine 32-cysteine 38 and cysteine 36-cysteine 45. Over 32 to 429 (CPANCVCSKT…TVTHKPEEDT (398 aa)) the chain is Extracellular. 3 N-linked (GlcNAc...) asparagine glycosylation sites follow: asparagine 68, asparagine 72, and asparagine 79. 2 LRR repeats span residues 104–125 (GLQK…AFAK) and 128–149 (HLRY…LFQT). Residues asparagine 133 and asparagine 163 are each glycosylated (N-linked (GlcNAc...) asparagine). The 50-residue stretch at 160–209 (NFFNCSCDIRWMQLWQEQGEAKLNSQNLYCINTDGSQLPLFRMNISQCDL) folds into the LRRCT domain. Cystine bridges form between cysteine 164/cysteine 189 and cysteine 166/cysteine 207. 7 N-linked (GlcNAc...) asparagine glycosylation sites follow: asparagine 203, asparagine 218, asparagine 232, asparagine 259, asparagine 267, asparagine 272, and asparagine 294. 2 Ig-like C2-type domains span residues 210-300 (PEIS…VALT) and 309-382 (SLEE…IAKN). Residues cysteine 231 and cysteine 284 are joined by a disulfide bond. Cysteine 320 and cysteine 362 are disulfide-bonded. Asparagine 375 and asparagine 388 each carry an N-linked (GlcNAc...) asparagine glycan. Residues 430 to 453 (FGVSIAVGLAAFACVLLVVLFVMI) traverse the membrane as a helical segment. Topologically, residues 454 to 825 (NKYGRRSKFG…ATPIYLDILG (372 aa)) are cytoplasmic. Phosphoserine is present on serine 493. Tyrosine 516 is subject to Phosphotyrosine; by autocatalysis. The 288-residue stretch at 538–825 (IVLKRELGEG…ATPIYLDILG (288 aa)) folds into the Protein kinase domain. ATP contacts are provided by residues 544–552 (LGEGAFGKV) and lysine 572. Aspartate 679 serves as the catalytic Proton acceptor. A phosphotyrosine; by autocatalysis mark is found at tyrosine 705, tyrosine 709, and tyrosine 710.

The protein belongs to the protein kinase superfamily. Tyr protein kinase family. Insulin receptor subfamily. In terms of assembly, exists in a dynamic equilibrium between monomeric (low affinity) and dimeric (high affinity) structures. Binds SH2B2. Interacts with SQSTM1 and KIDINS220. Interacts with PTPRS. Interacts with MAPK8IP3/JIP3. Post-translationally, ligand-mediated auto-phosphorylation.

Its subcellular location is the membrane. The enzyme catalyses L-tyrosyl-[protein] + ATP = O-phospho-L-tyrosyl-[protein] + ADP + H(+). Receptor tyrosine kinase involved in nervous system and probably heart development. Upon binding of its ligand NTF3/neurotrophin-3, NTRK3 autophosphorylates and activates different signaling pathways, including the phosphatidylinositol 3-kinase/AKT and the MAPK pathways, that control cell survival and differentiation. In Pan troglodytes (Chimpanzee), this protein is NT-3 growth factor receptor (NTRK3).